A 337-amino-acid polypeptide reads, in one-letter code: MALPLSDPNAPEFTRRYVNLADPRLGAQALEASDDFFAPKERMLNPEPAVFIPGKYDDHGKWMDGWETRRKRTTGYDWCVVKLARPGVIKGVDIDTSHFTGNFPPAASIEAAHVPDGAPNEATKWVEIVPATTLQGNSHHYVEARDANAYTHLRVNLYPDGGIARLRVYGQPQLDWAGASRSALFDLAAMENGGYVVAANNQHFGLASNVLLPGRGVNMGDGWETRRRREPGNDWAIVALAQPGVIRKVEIDTAHFKGNYPDRCSIQAAYVQGGTDSSLVTQAMFWPVLLGEQKLQMDKQHAFEAELAALGPVTHVRLNIIPDGGVSRLRVWGTLDK.

It belongs to the allantoicase family.

It carries out the reaction allantoate + H2O = (S)-ureidoglycolate + urea. It functions in the pathway nitrogen metabolism; (S)-allantoin degradation; (S)-ureidoglycolate from allantoate (aminidohydrolase route): step 1/1. The protein is Probable allantoicase 1 of Burkholderia mallei (strain ATCC 23344).